The following is a 283-amino-acid chain: MTPDPGLLEACWRDFVLGVVQGLTEFLPISSTAHLKVVPVLAGWGDPGLSVTAVIQLGSIVAVIAYFRADLAGVLKGISGAFRRGQWREPEARLGIAMLIGTLPILIAGLCIKLYWPGYATSSLRSVPAIAVVSIVMALLLGFAELLGPRLKQLNQVDGRDGLVVGLAQVFSLIPGVSRSGSTLTASLFDGWKRADAARFSFLLGIPAITIAGLVELKDAFSGSSAGGVLPVFVGICSAAVVSWLAIDWLIKYLESHSTRIFVVYRLLFGVLLLVWWSGSASN.

6 consecutive transmembrane segments (helical) span residues 47 to 67 (PGLS…IAYF), 94 to 114 (LGIA…CIKL), 127 to 147 (VPAI…AELL), 197 to 217 (AARF…LVEL), 227 to 247 (GGVL…WLAI), and 261 to 281 (IFVV…SGSA).

It belongs to the UppP family.

It localises to the cell inner membrane. The catalysed reaction is di-trans,octa-cis-undecaprenyl diphosphate + H2O = di-trans,octa-cis-undecaprenyl phosphate + phosphate + H(+). Its function is as follows. Catalyzes the dephosphorylation of undecaprenyl diphosphate (UPP). Confers resistance to bacitracin. The sequence is that of Undecaprenyl-diphosphatase from Synechococcus sp. (strain CC9311).